The chain runs to 291 residues: Formamidopyrimidine-DNA glycosylase (291 aa).

Proline 2 serves as the catalytic Schiff-base intermediate with DNA. The active-site Proton donor is the glutamate 3. Lysine 60 serves as the catalytic Proton donor; for beta-elimination activity. DNA-binding residues include histidine 108 and arginine 127. An FPG-type zinc finger spans residues 257–291 (WVYRRGGQACRICSTPIRRESLCGRGTHWCPNCQR). The active-site Proton donor; for delta-elimination activity is the arginine 281.

Belongs to the FPG family. In terms of assembly, monomer. Zn(2+) serves as cofactor.

It carries out the reaction Hydrolysis of DNA containing ring-opened 7-methylguanine residues, releasing 2,6-diamino-4-hydroxy-5-(N-methyl)formamidopyrimidine.. The catalysed reaction is 2'-deoxyribonucleotide-(2'-deoxyribose 5'-phosphate)-2'-deoxyribonucleotide-DNA = a 3'-end 2'-deoxyribonucleotide-(2,3-dehydro-2,3-deoxyribose 5'-phosphate)-DNA + a 5'-end 5'-phospho-2'-deoxyribonucleoside-DNA + H(+). Functionally, involved in base excision repair of DNA damaged by oxidation or by mutagenic agents. Acts as a DNA glycosylase that recognizes and removes damaged bases. Has a preference for oxidized purines, such as 7,8-dihydro-8-oxoguanine (8-oxoG). Has AP (apurinic/apyrimidinic) lyase activity and introduces nicks in the DNA strand. Cleaves the DNA backbone by beta-delta elimination to generate a single-strand break at the site of the removed base with both 3'- and 5'-phosphates. The polypeptide is Formamidopyrimidine-DNA glycosylase (Prochlorococcus marinus (strain MIT 9313)).